Here is a 99-residue protein sequence, read N- to C-terminus: NADH-quinone oxidoreductase subunit K (99 aa).

The next 3 membrane-spanning stretches (helical) occupy residues 3–23 (LVNY…TVLV), 28–48 (IIMF…FVAF), and 59–79 (VVAF…LAII).

It belongs to the complex I subunit 4L family. In terms of assembly, NDH-1 is composed of 14 different subunits. Subunits NuoA, H, J, K, L, M, N constitute the membrane sector of the complex.

It is found in the cell membrane. The catalysed reaction is a quinone + NADH + 5 H(+)(in) = a quinol + NAD(+) + 4 H(+)(out). In terms of biological role, NDH-1 shuttles electrons from NADH, via FMN and iron-sulfur (Fe-S) centers, to quinones in the respiratory chain. The immediate electron acceptor for the enzyme in this species is believed to be a menaquinone. Couples the redox reaction to proton translocation (for every two electrons transferred, four hydrogen ions are translocated across the cytoplasmic membrane), and thus conserves the redox energy in a proton gradient. This Beutenbergia cavernae (strain ATCC BAA-8 / DSM 12333 / CCUG 43141 / JCM 11478 / NBRC 16432 / NCIMB 13614 / HKI 0122) protein is NADH-quinone oxidoreductase subunit K.